Here is a 1291-residue protein sequence, read N- to C-terminus: MPRSDGFSPRKNLRRSARDHSRSYAGQCNEDFDDMYAPSSRRRSSGGVDGNGYTRSGRKINHNRYYEEEYHEAISSEEDERRYRTRRSSNSMTYRQQVMQAIDESKRNQKVPPAKRKRIYLSDEEEEDFAEAAHVENTVPERATRRSTRRRSSMHEELGVSEQEESPVRRTRKAAKRLGSEQPEENLAADDPLPMEGGGEIVLPIAEIDGMAEQENEDLIEKIGREEEEEGAEEDEQSGEKDPEEEEDDSSNAESSEESTAPRQYSLRRRQPVVQFNASEARENRRARLEHHRVANQNRHHRNRNGSRRRRSDSDSDSDDMVLPRPDKRQSRPHMHNRGERERGRFMPINMTEKELQSAQHILMDRMRKTDAGQGASDIDPMSVDSSVGFDQVGGLGHHIQSLKEVVLFPMLYPEVFEKFRINPPKGVVFYGPPGTGKTLVARALANECRRGANKVAFFMRKGADCLSKWVGESERQLRLLFDQAYAMRPSIIFFDEIDGLAPVRSSKQDQIHASIVSTLLALMDGLDGRGEVVVIGATNRLDTLDPALRRPGRFDRELRFSLPDLNARRQILDIHTSKWEENKPIPETLDAIAERTSGYCGADLKFLCTEAVLIGLRSRYPHIYMCSERLKLDVATIKITSEHFGHAMRRITPASRRDLTIPSRPLDERTSILLGDTVSNLISLRIPQGYRCVENAMATASSELEQVVRALEPNPTVPAIRLLLCGSEQLADGGQTSYVLPAILAKLDHLPVFSLSVSSLLTDGRPEEAFSNAIQSAMRASATGPCIMLLPSIDEWIKVIPVSVQHMLITCLESMTGFTPILFLSTLDTSFEDAPEYVTEIFRHANCITLNPSRRTIRQKYFEHVIEKINTPPKVFDPTVYEMPLPDDDSPDSKPSRKLNDDETRELLKMYTALQRQMRLFFKERLTRLMRDRRFVEFVEPVDPDEAEDYYEIIETPICMQDIMEKLNNCEYNHADKFVADLILIQTNALEYNPSTTKDGKLIRQMANTLRDAIDDLIECELDESFVERIETVSRMLQDAGVTPTSDKLLTEIPKGFARKKAWSMTNSLAKEIEQWTSEREAENQKMLSKLGVAAPTLELVVVPVEDMKSEEGTSTSTDGVPASAGNKKKLLKKKKGQKKSKTGESEEHDEDSTVEDAGEDTIVENLEIKKNQETPNSEHDIEMKDASKDSTPSVQISIAEKELIVSKPATCELIQCCVEKSEGWSVSELERLSSVLSHTIERFRDEWNRENLPAQLTQIVREWQTADDSNNTIVNGTLNKSNGNLANGH.

The disordered stretch occupies residues 1 to 345 (MPRSDGFSPR…HNRGERERGR (345 aa)). Over residues 64–82 (RYYEEEYHEAISSEEDERR) the composition is skewed to basic and acidic residues. The segment covering 88 to 99 (SSNSMTYRQQVM) has biased composition (polar residues). The segment covering 226 to 257 (EEEEEGAEEDEQSGEKDPEEEEDDSSNAESSE) has biased composition (acidic residues). The span at 298 to 311 (NRHHRNRNGSRRRR) shows a compositional bias: basic residues. Residue 432–439 (GPPGTGKT) coordinates ATP. Positions 914-1022 (ALQRQMRLFF…DAIDDLIECE (109 aa)) constitute a Bromo domain. The interval 1110–1194 (KSEEGTSTST…MKDASKDSTP (85 aa)) is disordered. The segment covering 1128-1142 (NKKKLLKKKKGQKKS) has biased composition (basic residues). Residues 1148-1164 (EEHDEDSTVEDAGEDTI) are compositionally biased toward acidic residues. Basic and acidic residues predominate over residues 1168-1190 (LEIKKNQETPNSEHDIEMKDASK).

This sequence belongs to the AAA ATPase family.

In terms of biological role, thought to form a complex that enhances transcription from repetitive DNA sequences by modulating chromatin structure. The polypeptide is Tat-binding homolog 7 (lex-1) (Caenorhabditis elegans).